Consider the following 142-residue polypeptide: Hemoglobin subunit theta-1 (142 aa).

The Globin domain maps to 2–142 (ALAAADRATV…VISALASDCR (141 aa)). Heme b-binding residues include His59 and His88.

This sequence belongs to the globin family.

The chain is Hemoglobin subunit theta-1 (HBQ1) from Equus caballus (Horse).